An 848-amino-acid polypeptide reads, in one-letter code: Translation initiation factor IF-2 (848 aa).

Positions 1–20 (MNESKGAVDSGLMSGKTERT) are disordered. Positions 346–516 (PRAPVVTVMG…LLMAELLELK (171 aa)) constitute a tr-type G domain. The interval 355–362 (GHVDHGKT) is G1. 355–362 (GHVDHGKT) provides a ligand contact to GTP. Residues 380-384 (GITQH) are G2. The interval 402–405 (DTPG) is G3. GTP contacts are provided by residues 402 to 406 (DTPGH) and 456 to 459 (NKID). The interval 456 to 459 (NKID) is G4. The tract at residues 492–494 (SAK) is G5.

Belongs to the TRAFAC class translation factor GTPase superfamily. Classic translation factor GTPase family. IF-2 subfamily.

Its subcellular location is the cytoplasm. Its function is as follows. One of the essential components for the initiation of protein synthesis. Protects formylmethionyl-tRNA from spontaneous hydrolysis and promotes its binding to the 30S ribosomal subunits. Also involved in the hydrolysis of GTP during the formation of the 70S ribosomal complex. This is Translation initiation factor IF-2 from Ehrlichia canis (strain Jake).